A 241-amino-acid chain; its full sequence is Phosphoribosylaminoimidazole-succinocarboxamide synthase (241 aa).

This sequence belongs to the SAICAR synthetase family.

The enzyme catalyses 5-amino-1-(5-phospho-D-ribosyl)imidazole-4-carboxylate + L-aspartate + ATP = (2S)-2-[5-amino-1-(5-phospho-beta-D-ribosyl)imidazole-4-carboxamido]succinate + ADP + phosphate + 2 H(+). It functions in the pathway purine metabolism; IMP biosynthesis via de novo pathway; 5-amino-1-(5-phospho-D-ribosyl)imidazole-4-carboxamide from 5-amino-1-(5-phospho-D-ribosyl)imidazole-4-carboxylate: step 1/2. The sequence is that of Phosphoribosylaminoimidazole-succinocarboxamide synthase (purC) from Bacillus subtilis (strain 168).